We begin with the raw amino-acid sequence, 116 residues long: MPRSVNHVASRARRKKILGLTKGYFGARKNVWTVAKNTWEKGLTYAYRDRKNKKRNFRALWIQRINAAARLEGMSYSKLMGALHKAGIEINRKVLADLAMNHPEAFKAIVAKAKAA.

Belongs to the bacterial ribosomal protein bL20 family.

Its function is as follows. Binds directly to 23S ribosomal RNA and is necessary for the in vitro assembly process of the 50S ribosomal subunit. It is not involved in the protein synthesizing functions of that subunit. The chain is Large ribosomal subunit protein bL20 from Phocaeicola vulgatus (strain ATCC 8482 / DSM 1447 / JCM 5826 / CCUG 4940 / NBRC 14291 / NCTC 11154) (Bacteroides vulgatus).